The following is a 320-amino-acid chain: MSGGSSGGQQREREILLVAHPGRAEITETARRVGKIFERAGIGMRVLVDEVDSTRIEPMDGMAADEFLVPGLEVTIVQAGPDAALGCEMVLVLGGDGTFLRAAELAQAASIPVLGINLGRIGFLAETEAEHLDEALGQVVRREYRIEHRMTLDVLVRVDDEIIERGWALNEASIENRSRLGVLEVVLEVDGRPVSAFGCDGVLISTPTGSTAYAFSAGGPVVWPELEALLVVPSNAHALFARPLVTSPESLIAVETVAGSHDGLVFCDGRRTLELPAGARVEVVRGKEPVRWVRLDSAPFADRMVRKFELPVTGWRGRKP.

Aspartate 96 functions as the Proton acceptor in the catalytic mechanism. NAD(+) is bound by residues 96–97 (DG), arginine 101, 170–171 (NE), aspartate 200, and 211–216 (TAYAFS).

This sequence belongs to the NAD kinase family. Requires a divalent metal cation as cofactor.

The protein resides in the cytoplasm. The catalysed reaction is NAD(+) + ATP = ADP + NADP(+) + H(+). Involved in the regulation of the intracellular balance of NAD and NADP, and is a key enzyme in the biosynthesis of NADP. Catalyzes specifically the phosphorylation on 2'-hydroxyl of the adenosine moiety of NAD to yield NADP. The polypeptide is NAD kinase (Rhodococcus opacus (strain B4)).